Here is a 666-residue protein sequence, read N- to C-terminus: MGESSEDIDQMFSTLLGEMDLLTQSLGVDTLPPPDPNPPRAEFNYSVGFKDLNESLNALEDQDLDALMADLVADISEAEQRTIQAQKESLQNQHHSASLQASIFSGAASLGYGTNVAATGISQYEDDLPPPPADPVLDLPLPPPPPEPLSQEEEEAQAKADKIKLALEKLKEAKVKKLVVKVHMNDNSTKSLMVDERQLARDVLDNLFEKTHCDCNVDWCLYEIYPELQIERFFEDHENVVEVLSDWTRDTENKILFLEKEEKYAVFKNPQNFYLDNRGKKESKETNEKMNAKNKESLLEESFCGTSIIVPELEGALYLKEDGKKSWKRRYFLLRASGIYYVPKGKTKTSRDLACFIQFENVNIYYGTQHKMKYKAPTDYCFVLKHPQIQKESQYIKYLCCDDTRTLNQWVMGIRIAKYGKTLYDNYQRAVAKAGLASRWTNLGTVNAAAPAQPSTGPKTGTTQPNGQIPQATHSVSAVLQEAQRHAETSKDKKPALGNHHDPAVPRAPHAPKSSLPPPPPVRRSSDTSGSPATPLKAKGTGGGGLPAPPDDFLPPPPPPPPLDDPELPPPPPDFMEPPPDFVPPPPPSYAGIAGSELPPPPPPPPAPAPAPVPDSARPPPAVAKRPPVPPKRQENPGHPGGAGGGEQDFMSDLMKALQKKRGNVS.

S55 is modified (phosphoserine). A disordered region spans residues 122 to 155 (SQYEDDLPPPPADPVLDLPLPPPPPEPLSQEEEE). The segment covering 129–148 (PPPPADPVLDLPLPPPPPEP) has biased composition (pro residues). Residues 176-263 (KKLVVKVHMN…KILFLEKEEK (88 aa)) form the Ras-associating domain. The PH domain occupies 310–419 (VPELEGALYL…WVMGIRIAKY (110 aa)). Positions 448 to 666 (AAAPAQPSTG…ALQKKRGNVS (219 aa)) are disordered. Residues 453–478 (QPSTGPKTGTTQPNGQIPQATHSVSA) are compositionally biased toward polar residues. Residues 483 to 504 (AQRHAETSKDKKPALGNHHDPA) show a composition bias toward basic and acidic residues. S526 bears the Phosphoserine mark. T528 carries the post-translational modification Phosphothreonine. S531 carries the phosphoserine modification. Composition is skewed to pro residues over residues 547–589 (PAPP…PPPS) and 598–631 (LPPP…PVPP).

Belongs to the MRL family. As to quaternary structure, interacts, through the N-terminal Pro-rich region, with the WW domain of APBB1. Interacts with RAP1A, PFN1, TLN1, VASP, VCL and ENAH. Widely expressed with high expression in thymus, spleen, lymph node, bone marrow and peripheral leukocytes.

The protein resides in the cell membrane. It localises to the cell projection. Its subcellular location is the lamellipodium. It is found in the cell junction. The protein localises to the focal adhesion. The protein resides in the cytoplasm. It localises to the cytoskeleton. Appears to function in the signal transduction from Ras activation to actin cytoskeletal remodeling. Suppresses insulin-induced promoter activities through AP1 and SRE. Mediates Rap1-induced adhesion. The sequence is that of Amyloid beta A4 precursor protein-binding family B member 1-interacting protein (APBB1IP) from Homo sapiens (Human).